A 575-amino-acid chain; its full sequence is Transcription factor coe2 (575 aa).

The tract at residues 63–66 (RKSN) is interaction with DNA. The C5-type zinc-finger motif lies at 151–170 (CRVLLTHEVMCSRCCEKKSC). Interaction with DNA regions lie at residues 197–204 (NCLKTAGN) and 236–239 (NNSK). The region spanning 254-336 (PCIKAISPSE…CKGAPGRFIY (83 aa)) is the IPT/TIG domain. Residues 450–487 (IRNTSSISPRGYSSSSTPQQSNYSTPSNSMNGYSNVPM) form a disordered region. Over residues 454-476 (SSISPRGYSSSSTPQQSNYSTPS) the composition is skewed to low complexity. Positions 477-487 (NSMNGYSNVPM) are enriched in polar residues.

Belongs to the COE family.

It is found in the nucleus. In terms of biological role, may play a pivotal role in the transcriptional cascade that specifies primary neurons in embryos. Stabilizes the higher neural potential of selected progenitor cells that express neurog2/X-ngnr-1 by maintaining Delta-Notch signaling. Thus ensures the transition between neural competence and irreversible commitment to a neural fate. Also promotes neuronal differentiation by activating neurod1 expression, directly or indirectly. The sequence is that of Transcription factor coe2 from Xenopus tropicalis (Western clawed frog).